The chain runs to 1207 residues: DNA-directed RNA polymerase, mitochondrial (1207 aa).

The N-terminal 41 residues, methionine 1–serine 41, are a transit peptide targeting the mitochondrion. Disordered stretches follow at residues methionine 1–glutamate 48 and lysine 82–alanine 103. 2 PPR repeats span residues threonine 232 to proline 266 and aspartate 267 to proline 302. The interval valine 702–valine 724 is disordered. The segment at phenylalanine 773–serine 1207 is mediates interaction with TEFM. Residues aspartate 893, lysine 962, and aspartate 1121 contribute to the active site.

The protein belongs to the phage and mitochondrial RNA polymerase family. As to quaternary structure, homodimer. Component of the mitochondrial transcription initiation complex, composed at least of TFB2M, TFAM and POLRMT. In this complex TFAM recruits POLRMT to the promoter whereas TFB2M induces structural changes in POLRMT to enable promoter opening and trapping of the DNA non-template strand. Upon metabolic stress, forms a complex composed of FOXO3, SIRT3 and mitochondrial RNA polymerase POLRMT; the complex is recruited to mtDNA in a SIRT3-dependent manner. Also forms a complex composed of FOXO3, SIRT3, TFAM and POLRMT. Interacts with TFB1M and TFB2M, leading to the stimulation of transcription. Interacts with TEFM. Interacts with MTRES1.

It is found in the mitochondrion. It carries out the reaction RNA(n) + a ribonucleoside 5'-triphosphate = RNA(n+1) + diphosphate. Functionally, DNA-dependent RNA polymerase catalyzes the transcription of mitochondrial DNA into RNA using the four ribonucleoside triphosphates as substrates. Component of the mitochondrial transcription initiation complex, composed at least of TFB2M, TFAM and POLRMT that is required for basal transcription of mitochondrial DNA. In this complex, TFAM recruits POLRMT to a specific promoter whereas TFB2M induces structural changes in POLRMT to enable promoter opening and trapping of the DNA non-template strand. Has DNA primase activity. Catalyzes the synthesis of short RNA primers that are necessary for the initiation of lagging-strand DNA synthesis from the origin of light-strand DNA replication (OriL). This Mus musculus (Mouse) protein is DNA-directed RNA polymerase, mitochondrial.